A 372-amino-acid polypeptide reads, in one-letter code: Alanine dehydrogenase 2 (372 aa).

Residue His95 is part of the active site. Lys169–Asn199 contacts NAD(+).

It belongs to the AlaDH/PNT family.

The enzyme catalyses L-alanine + NAD(+) + H2O = pyruvate + NH4(+) + NADH + H(+). The protein operates within amino-acid degradation; L-alanine degradation via dehydrogenase pathway; NH(3) and pyruvate from L-alanine: step 1/1. Its function is as follows. May play a role in cell wall synthesis as L-alanine is an important constituent of the peptidoglycan layer. In Staphylococcus aureus (strain Mu50 / ATCC 700699), this protein is Alanine dehydrogenase 2 (ald2).